The primary structure comprises 265 residues: Undecaprenyl-diphosphatase (265 aa).

Helical transmembrane passes span 41–61, 75–95, 104–124, 137–157, 180–200, 215–235, and 244–264; these read IAYT…LIYF, LKFL…LYVI, YNPS…GIYI, LSTK…LPGV, YSYL…LLFT, GIAL…GFLL, and YLID…GLII.

This sequence belongs to the UppP family.

It localises to the cell membrane. The enzyme catalyses di-trans,octa-cis-undecaprenyl diphosphate + H2O = di-trans,octa-cis-undecaprenyl phosphate + phosphate + H(+). Catalyzes the dephosphorylation of undecaprenyl diphosphate (UPP). The sequence is that of Undecaprenyl-diphosphatase from Saccharolobus islandicus (strain Y.N.15.51 / Yellowstone #2) (Sulfolobus islandicus).